Here is a 523-residue protein sequence, read N- to C-terminus: Peptide chain release factor 3 (523 aa).

Positions 8-275 (KKRRTFAIIS…TFLEYAPEPH (268 aa)) constitute a tr-type G domain. Residues 17–24 (SHPDAGKT), 85–89 (DTPGH), and 139–142 (NKLD) contribute to the GTP site.

The protein belongs to the TRAFAC class translation factor GTPase superfamily. Classic translation factor GTPase family. PrfC subfamily.

It is found in the cytoplasm. Its function is as follows. Increases the formation of ribosomal termination complexes and stimulates activities of RF-1 and RF-2. It binds guanine nucleotides and has strong preference for UGA stop codons. It may interact directly with the ribosome. The stimulation of RF-1 and RF-2 is significantly reduced by GTP and GDP, but not by GMP. This Lactococcus lactis subsp. cremoris (strain SK11) protein is Peptide chain release factor 3.